The chain runs to 492 residues: MAVASRLAVARVAPDGGAAGRRRRRGRPVVAVPTAGRGRGGAVAASPPTEEAVQMTEPLTKEDLVAYLVSGCKPKENWRIGTEHEKFGFEVDTLRPIKYDQIRDILNGLAERFDWDKIVEENNVIGLKQGKQSISLEPGGQFELSGAPLETLHQTCAEVNSHLYQVKAVGEEMGIGFLGIGFQPKWALSDIPIMPKGRYEIMRNYMPKVGSLGLDMMFRTCTVQVNLDFSSEQDMIRKFRTGLALQPIATAIFANSPFKEGKPNGYLSLRSHIWTDTDNNRSGMLPFVFDDSFGFERYVDYALDIPMYFVYRNKKYIDCTGMSFRDFMVGKLPQAPGELPTLNDWENHLTTIFPEVRLKRYLEMRGADGGPWRRLCALPVFWVGLLYDEESLQSISDMTSDWTNEEREMLRRKVPVTGLKTPFRDGYVRDLAEEILQLSKNGLERRGYKEVGFLREVDAVISSGVTPAERLLNLYETKWQRSVDPVFQELLY.

Cysteine 156 and cysteine 376 are joined by a disulfide.

The protein belongs to the carboxylate-amine ligase family. Glutamate--cysteine ligase type 2 subfamily. Homodimer or monomer when oxidized or reduced, respectively. In terms of processing, the Cys-156-Cys-376 disulfide bridge is known to modulate the enzyme activity according to the redox status. The oxidized form constitutes the active enzyme.

It is found in the plastid. Its subcellular location is the chloroplast. The catalysed reaction is L-cysteine + L-glutamate + ATP = gamma-L-glutamyl-L-cysteine + ADP + phosphate + H(+). It functions in the pathway sulfur metabolism; glutathione biosynthesis; glutathione from L-cysteine and L-glutamate: step 1/2. This is Glutamate--cysteine ligase A, chloroplastic (GSH1-1) from Oryza sativa subsp. japonica (Rice).